The chain runs to 92 residues: Putative septation protein SpoVG (92 aa).

Belongs to the SpoVG family.

Its function is as follows. Could be involved in septation. This chain is Putative septation protein SpoVG, found in Clostridium botulinum (strain Eklund 17B / Type B).